Here is a 176-residue protein sequence, read N- to C-terminus: MSDNQQPVVLGKLGSSHGIKGWLKITAYTDSVEGIFDYVPWLIKDQGVWREVKVTQWRFQGKAVVAELEGVTTREQAQMLTNCEIAILPEQMKELDDNDFYHRDLIGCEVTNVNGYNLGIVDQIVETGSNDVLLVKANAKDAFGKVERMIPFVTEQFIKQVDLQGKQIVVDWDPDF.

One can recognise a PRC barrel domain in the interval 97–176; that stretch reads DNDFYHRDLI…QIVVDWDPDF (80 aa).

Belongs to the RimM family. As to quaternary structure, binds ribosomal protein uS19.

The protein localises to the cytoplasm. Its function is as follows. An accessory protein needed during the final step in the assembly of 30S ribosomal subunit, possibly for assembly of the head region. Essential for efficient processing of 16S rRNA. May be needed both before and after RbfA during the maturation of 16S rRNA. It has affinity for free ribosomal 30S subunits but not for 70S ribosomes. This Shewanella denitrificans (strain OS217 / ATCC BAA-1090 / DSM 15013) protein is Ribosome maturation factor RimM.